A 257-amino-acid polypeptide reads, in one-letter code: Hydroxyacylglutathione hydrolase (257 aa).

Zn(2+) contacts are provided by H54, H56, D58, H59, H113, D137, and H175.

Belongs to the metallo-beta-lactamase superfamily. Glyoxalase II family. In terms of assembly, monomer. It depends on Zn(2+) as a cofactor.

The enzyme catalyses an S-(2-hydroxyacyl)glutathione + H2O = a 2-hydroxy carboxylate + glutathione + H(+). It participates in secondary metabolite metabolism; methylglyoxal degradation; (R)-lactate from methylglyoxal: step 2/2. Functionally, thiolesterase that catalyzes the hydrolysis of S-D-lactoyl-glutathione to form glutathione and D-lactic acid. In Rippkaea orientalis (strain PCC 8801 / RF-1) (Cyanothece sp. (strain PCC 8801)), this protein is Hydroxyacylglutathione hydrolase.